Consider the following 614-residue polypeptide: Lamin-2 (614 aa).

Residues 1–10 are compositionally biased toward basic residues; the sequence is MSAQVSKKRG. The interval 1–51 is disordered; the sequence is MSAQVSKKRGGSNPPKTGQHAASSTTSRTESSATSQTIYERQEVETRTQRT. A head region spans residues 1-76; sequence MSAQVSKKRG…GTAGLAGSPL (76 aa). Low complexity predominate over residues 21–37; the sequence is AASSTTSRTESSATSQT. The coil 1A stretch occupies residues 77-117; that stretch reads SRHQEKEEFKLLNNRFANYIDTIRAQQEEISVLRRKVETVS. Residues 81-433 form the IF rod domain; it reads EKEEFKLLNN…ALLRTEEERL (353 aa). The tract at residues 118-128 is linker 1; that stretch reads SKEVVENQKIK. Residues 129–268 are coil 1B; that stretch reads ERYNLEIANL…EEIVSLRNQR (140 aa). The interval 269-286 is linker 2; that stretch reads RTEITEVETRMGEEYQSK. A coil 2 region spans residues 287-426; sequence IVEQLNDLRA…AELATYNALL (140 aa). The segment at 427-611 is tail; it reads RTEEERLNMK…ADSSDHQKNC (185 aa). The disordered stretch occupies residues 433–454; it reads LNMKSPPFPSTPDSQRRGTKRR. The Nuclear localization signal motif lies at 449–458; sequence RGTKRRIADS. Positions 462–581 constitute an LTD domain; the sequence is TRFRNEASAT…VARREMTQSS (120 aa). Residue C611 is the site of S-farnesyl cysteine attachment. Positions 612–614 are cleaved as a propeptide — removed in mature form; it reads VIM.

Belongs to the intermediate filament family.

The protein localises to the nucleus inner membrane. Its function is as follows. Intermediate filament (IF) protein, component of the nuclear lamina, a fibrous layer on the nucleoplasmic side of the inner nuclear membrane, which is thought to provide a framework for the nuclear envelope. The polypeptide is Lamin-2 (Hypsibius exemplaris (Freshwater tardigrade)).